We begin with the raw amino-acid sequence, 92 residues long: Small ribosomal subunit protein uS19c (92 aa).

Belongs to the universal ribosomal protein uS19 family.

It localises to the plastid. The protein localises to the chloroplast. In terms of biological role, protein S19 forms a complex with S13 that binds strongly to the 16S ribosomal RNA. This Populus alba (White poplar) protein is Small ribosomal subunit protein uS19c.